The chain runs to 184 residues: Elongation factor P (184 aa).

The protein belongs to the elongation factor P family.

The protein localises to the cytoplasm. Its pathway is protein biosynthesis; polypeptide chain elongation. Its function is as follows. Involved in peptide bond synthesis. Stimulates efficient translation and peptide-bond synthesis on native or reconstituted 70S ribosomes in vitro. Probably functions indirectly by altering the affinity of the ribosome for aminoacyl-tRNA, thus increasing their reactivity as acceptors for peptidyl transferase. This is Elongation factor P from Paracidovorax citrulli (strain AAC00-1) (Acidovorax citrulli).